Consider the following 242-residue polypeptide: Lactate utilization protein A 2 (242 aa).

This sequence belongs to the LutA/YkgE family.

In terms of biological role, is involved in L-lactate degradation and allows cells to grow with lactate as the sole carbon source. The protein is Lactate utilization protein A 2 of Bacillus cereus (strain ZK / E33L).